Reading from the N-terminus, the 514-residue chain is 2-isopropylmalate synthase (514 aa).

In terms of domain architecture, Pyruvate carboxyltransferase spans 5–267; it reads LVIFDTTLRD…DTRIHTPEIL (263 aa). Mn(2+) contacts are provided by D14, H202, H204, and N238. The interval 394–514 is regulatory domain; that stretch reads RLVALKVGTQ…GSKEHPQAHV (121 aa).

Belongs to the alpha-IPM synthase/homocitrate synthase family. LeuA type 1 subfamily. Homodimer. Mn(2+) is required as a cofactor.

Its subcellular location is the cytoplasm. The catalysed reaction is 3-methyl-2-oxobutanoate + acetyl-CoA + H2O = (2S)-2-isopropylmalate + CoA + H(+). It participates in amino-acid biosynthesis; L-leucine biosynthesis; L-leucine from 3-methyl-2-oxobutanoate: step 1/4. Its function is as follows. Catalyzes the condensation of the acetyl group of acetyl-CoA with 3-methyl-2-oxobutanoate (2-ketoisovalerate) to form 3-carboxy-3-hydroxy-4-methylpentanoate (2-isopropylmalate). In Hydrogenovibrio crunogenus (strain DSM 25203 / XCL-2) (Thiomicrospira crunogena), this protein is 2-isopropylmalate synthase.